The following is a 98-amino-acid chain: HssA/B-like protein 50 (98 aa).

Disordered regions lie at residues 1 to 26 (MTLF…SFGS) and 68 to 98 (TRGS…CCGI). Over residues 84–98 (GHGGMGGGNGSCCGI) the composition is skewed to gly residues.

It belongs to the hssA/B family.

This chain is HssA/B-like protein 50 (hssl50), found in Dictyostelium discoideum (Social amoeba).